The sequence spans 514 residues: Cytochrome P450 monooxygenase MO6277 (514 aa).

The helical transmembrane segment at 6–26 threads the bilayer; that stretch reads LTVLALLGGTLLLYCSGLVIY. Cysteine 457 is a binding site for heme.

This sequence belongs to the cytochrome P450 family. Heme is required as a cofactor.

The protein localises to the membrane. It catalyses the reaction polyporic acid + reduced [NADPH--hemoprotein reductase] + O2 = ascocorynin + oxidized [NADPH--hemoprotein reductase] + H2O + H(+). It participates in secondary metabolite biosynthesis. Its function is as follows. Cytochrome P450 monooxygenase that hydroxylates polyporic acid produced by the nonribosomal peptide synthetase acyN to produce the less toxic metabolite ascocorynin. The hydrophobic substrate polyporic acid might approach the active site from the membrane and, after hydroxylation into ascocorynin, leaves into the cytoplasm. MO6277 appears vital to avoid high-level accumulation of polyporic acid in the fungal membrane. This chain is Cytochrome P450 monooxygenase MO6277, found in Ascocoryne sarcoides (Purple jellydisc fungus).